Here is a 479-residue protein sequence, read N- to C-terminus: Aspartyl/glutamyl-tRNA(Asn/Gln) amidotransferase subunit B (479 aa).

It belongs to the GatB/GatE family. GatB subfamily. As to quaternary structure, heterotrimer of A, B and C subunits.

The enzyme catalyses L-glutamyl-tRNA(Gln) + L-glutamine + ATP + H2O = L-glutaminyl-tRNA(Gln) + L-glutamate + ADP + phosphate + H(+). The catalysed reaction is L-aspartyl-tRNA(Asn) + L-glutamine + ATP + H2O = L-asparaginyl-tRNA(Asn) + L-glutamate + ADP + phosphate + 2 H(+). Functionally, allows the formation of correctly charged Asn-tRNA(Asn) or Gln-tRNA(Gln) through the transamidation of misacylated Asp-tRNA(Asn) or Glu-tRNA(Gln) in organisms which lack either or both of asparaginyl-tRNA or glutaminyl-tRNA synthetases. The reaction takes place in the presence of glutamine and ATP through an activated phospho-Asp-tRNA(Asn) or phospho-Glu-tRNA(Gln). In Streptococcus pyogenes serotype M4 (strain MGAS10750), this protein is Aspartyl/glutamyl-tRNA(Asn/Gln) amidotransferase subunit B.